We begin with the raw amino-acid sequence, 451 residues long: Multidrug export protein MepA (451 aa).

The next 12 helical transmembrane spans lie at 26–46, 52–72, 97–117, 139–159, 170–190, 194–214, 245–265, 282–302, 318–338, 355–375, 390–410, and 417–437; these read MIGTLLSVIYGILNIYFIGFL, ISAISLTLPVFAILMGLGNLF, SFSIYGGIALGLIVILVALPF, LKVMFLSAPFVILFFILEQFA, IGMLASVSLNIILDPILIFGF, VVGAALGTAISNVAAALFFII, IPAFLMSILMGFTGLVLNLFL, LVQFPELIIMGLCEGVVPLIA, AVIMSIGVIFVVCMIAVFTIG, ATFILKVTMTSLLLNGIGFLF, IMAILQGVVIIPVLFIMNALF, and WSLLIAESLCALAAMLIVYLL.

This sequence belongs to the multi antimicrobial extrusion (MATE) (TC 2.A.66.1) family. MepA subfamily.

The protein localises to the cell membrane. Functionally, multidrug resistance efflux protein. In Staphylococcus aureus (strain bovine RF122 / ET3-1), this protein is Multidrug export protein MepA (mepA).